We begin with the raw amino-acid sequence, 155 residues long: Cytochrome c oxidase subunit 4, mitochondrial (155 aa).

The N-terminal 25 residues, 1–25 (MLSLRQSIRFFKPATRTLCSSRYLL), are a transit peptide targeting the mitochondrion. Position 55 is a phosphothreonine (Thr-55). Zn(2+) is bound by residues Cys-111, His-119, Cys-134, and Cys-137.

The protein belongs to the cytochrome c oxidase subunit 5B family. Component of the cytochrome c oxidase (complex IV, CIV), a multisubunit enzyme composed of 12 subunits. The complex is composed of a catalytic core of 3 subunits COX1, COX2 and COX3, encoded in the mitochondrial DNA, and 9 supernumerary subunits COX4, COX5A (or COX5B), COX6, COX7, COX8, COX9, COX12, COX13 and COX26, which are encoded in the nuclear genome. The complex exists as a monomer or a dimer and forms supercomplexes (SCs) in the inner mitochondrial membrane with a dimer of ubiquinol-cytochrome c oxidoreductase (cytochrome b-c1 complex, complex III, CIII), resulting in 2 different assemblies (supercomplexes III(2)IV and III(2)IV(2)).

The protein localises to the mitochondrion inner membrane. It functions in the pathway energy metabolism; oxidative phosphorylation. Functionally, component of the cytochrome c oxidase, the last enzyme in the mitochondrial electron transport chain which drives oxidative phosphorylation. The respiratory chain contains 3 multisubunit complexes succinate dehydrogenase (complex II, CII), ubiquinol-cytochrome c oxidoreductase (cytochrome b-c1 complex, complex III, CIII) and cytochrome c oxidase (complex IV, CIV), that cooperate to transfer electrons derived from NADH and succinate to molecular oxygen, creating an electrochemical gradient over the inner membrane that drives transmembrane transport and the ATP synthase. Cytochrome c oxidase is the component of the respiratory chain that catalyzes the reduction of oxygen to water. Electrons originating from reduced cytochrome c in the intermembrane space (IMS) are transferred via the dinuclear copper A center (CU(A)) of COX2 and heme A of COX1 to the active site in COX1, a binuclear center (BNC) formed by heme A3 and copper B (CU(B)). The BNC reduces molecular oxygen to 2 water molecules using 4 electrons from cytochrome c in the IMS and 4 protons from the mitochondrial matrix. The chain is Cytochrome c oxidase subunit 4, mitochondrial (COX4) from Saccharomyces cerevisiae (strain ATCC 204508 / S288c) (Baker's yeast).